The chain runs to 435 residues: Probable exopolygalacturonase X (435 aa).

The signal sequence occupies residues 1–22 (MRLTHVLSHTLGLLALGATAEA). Positions 31-55 (CSPKKPFRPLPTSSSRDKTCHVRSH) are disordered. Residues 45–55 (SRDKTCHVRSH) are compositionally biased toward basic and acidic residues. Asparagine 93, asparagine 112, asparagine 128, and asparagine 198 each carry an N-linked (GlcNAc...) asparagine glycan. PbH1 repeat units follow at residues 199 to 229 (SSNV…DTYR) and 230 to 251 (SNNI…SFKP). The active-site Proton donor is the aspartate 244. Cysteine 246 and cysteine 263 are disulfide-bonded. Residues asparagine 252 and asparagine 264 are each glycosylated (N-linked (GlcNAc...) asparagine). The PbH1 3 repeat unit spans residues 253 to 273 (STNILVQNLHCNGSHGISVGS). Histidine 267 is an active-site residue. N-linked (GlcNAc...) asparagine glycans are attached at residues asparagine 291, asparagine 296, asparagine 328, and asparagine 353. The PbH1 4 repeat unit spans residues 326 to 347 (VKNITYDTALIDNVDWAIEITQ). One copy of the PbH1 5 repeat lies at 361–409 (PSSLTISDVHIKNFRGTTSGSEDPYVGTIVCSSPDTCSDIYTSNINVTS). Residues cysteine 391 and cysteine 397 are joined by a disulfide bond. N-linked (GlcNAc...) asparagine glycans are attached at residues asparagine 406 and asparagine 429.

It belongs to the glycosyl hydrolase 28 family.

Its subcellular location is the secreted. The catalysed reaction is [(1-&gt;4)-alpha-D-galacturonosyl](n) + H2O = alpha-D-galacturonate + [(1-&gt;4)-alpha-D-galacturonosyl](n-1). Its function is as follows. Specific in hydrolyzing the terminal glycosidic bond of polygalacturonic acid and oligogalacturonates. This Aspergillus niger (strain ATCC MYA-4892 / CBS 513.88 / FGSC A1513) protein is Probable exopolygalacturonase X (pgaX).